The chain runs to 372 residues: Maltose/maltodextrin import ATP-binding protein MalK (372 aa).

An ABC transporter domain is found at 4–234; the sequence is VTLKNVCKAY…PQNRFVAGFI (231 aa). 36–43 is an ATP binding site; it reads GPSGCGKS.

It belongs to the ABC transporter superfamily. Maltooligosaccharide importer (TC 3.A.1.1.1) family. In terms of assembly, the complex is composed of two ATP-binding proteins (MalK), two transmembrane proteins (MalG and MalK) and a solute-binding protein (MalE).

The protein localises to the cell inner membrane. The catalysed reaction is D-maltose(out) + ATP + H2O = D-maltose(in) + ADP + phosphate + H(+). Part of the ABC transporter complex MalEFGK involved in maltose/maltodextrin import. Responsible for energy coupling to the transport system. This is Maltose/maltodextrin import ATP-binding protein MalK from Vibrio parahaemolyticus serotype O3:K6 (strain RIMD 2210633).